The primary structure comprises 385 residues: Protein pelota homolog (385 aa).

Belongs to the eukaryotic release factor 1 family. Pelota subfamily. As to quaternary structure, component of the Pelota-HBS1L complex, also named Dom34-Hbs1 complex, composed of PELO and HBS1L. It depends on a divalent metal cation as a cofactor.

The protein resides in the cytoplasm. In terms of biological role, component of the Pelota-HBS1L complex, a complex that recognizes stalled ribosomes and triggers the No-Go Decay (NGD) pathway. In the Pelota-HBS1L complex, PELO recognizes ribosomes stalled at the 3' end of an mRNA and engages stalled ribosomes by destabilizing mRNA in the mRNA channel. Following mRNA extraction from stalled ribosomes by the SKI complex, the Pelota-HBS1L complex promotes recruitment of ABCE1, which drives the disassembly of stalled ribosomes, followed by degradation of damaged mRNAs as part of the NGD pathway. This Gallus gallus (Chicken) protein is Protein pelota homolog (PELO).